We begin with the raw amino-acid sequence, 406 residues long: Acetyltransferase sirH (406 aa).

6 consecutive transmembrane segments (helical) span residues 9–29 (IFIEAQLPLIYANIILAFALG), 32–52 (AHTFRVCLTLPILLFLVCQSL), 63–83 (LLSNNSLVMFTVFVYIDWILL), 295–315 (VQLFVGFGVSAGLHAGVALLC), 323–343 (SALFFFGIQAPIIMLEDHVIA), and 358–378 (FIGFVWTTLAIGFTCRAWVGS).

The protein belongs to the wax synthase family.

The protein localises to the membrane. It participates in mycotoxin biosynthesis. Functionally, acetyltransferase; part of the gene cluster that mediates the biosynthesis of sirodesmin PL, an epipolythiodioxopiperazine (ETP) characterized by a disulfide bridged cyclic dipeptide and that acts as a phytotoxin which is involved in the blackleg didease of canola. SirD catalyzes the O-prenylation of L-tyrosine (L-Tyr) in the presence of dimethylallyl diphosphate (DMAPP) to yield 4-O-dimethylallyl-L-Tyr, and therefore represents probably the first pathway-specific enzyme in the biosynthesis of sirodesmin PL. 4-O-dimethylallyl-L-Tyr, then undergoes condensation with L-Ser in a reaction catalyzed by the non-ribosomal peptide synthase sirP to form the diketopiperazine (DKP) backbone. Further bishydroxylation of the DKP performed by the cytochrome P450 monooxygenase sirC leads to the production of the intermediate phomamide. This step is essential to form the reactive thiol group required for toxicity of sirodesmin PL. The next steps of sirodesmin biosynthesis are not well understood yet, but some predictions could be made from intermediate compounds identification. Phomamide is converted into phomalizarine via oxidation, probably by sirT. Further oxidation, methylation (by sirM or sirN) and reduction steps convert phomalizarine to deacetyl sirodesmin. Finally, acetyltransferase sirH probably acetylates deacetyl sirodesmin to produce sirodesmin PL. The sequence is that of Acetyltransferase sirH from Leptosphaeria maculans (Blackleg fungus).